Consider the following 352-residue polypeptide: Photosystem II D2 protein (352 aa).

A helical transmembrane segment spans residues 40–60; that stretch reads CAYLAVGAWFTGTTFVTSWYT. His117 contributes to the chlorophyll a binding site. The helical transmembrane segment at 124–140 threads the bilayer; that stretch reads GFTLRQFEIARLIGLRP. Positions 129 and 142 each coordinate pheophytin a. Residues 152–165 traverse the membrane as a helical segment; that stretch reads VFVSVFLLYPLGQA. Chlorophyll a is bound at residue His197. The helical transmembrane segment at 207 to 227 threads the bilayer; sequence AALLCAIHGATVENTLFEDGD. A plastoquinone-binding residues include His214 and Phe261. His214 provides a ligand contact to Fe cation. Position 268 (His268) interacts with Fe cation. A helical membrane pass occupies residues 278 to 294; sequence GLWMSAIGVVGLGVNLR.

The protein belongs to the reaction center PufL/M/PsbA/D family. In terms of assembly, PSII is composed of 1 copy each of membrane proteins PsbA, PsbB, PsbC, PsbD, PsbE, PsbF, PsbH, PsbI, PsbJ, PsbK, PsbL, PsbM, PsbT, PsbX, PsbY, PsbZ, Psb30/Ycf12, at least 3 peripheral proteins of the oxygen-evolving complex and a large number of cofactors. It forms dimeric complexes. The D1/D2 heterodimer binds P680, chlorophylls that are the primary electron donor of PSII, and subsequent electron acceptors. It shares a non-heme iron and each subunit binds pheophytin, quinone, additional chlorophylls, carotenoids and lipids. There is also a Cl(-1) ion associated with D1 and D2, which is required for oxygen evolution. The PSII complex binds additional chlorophylls, carotenoids and specific lipids. is required as a cofactor.

The protein resides in the plastid. The protein localises to the cyanelle thylakoid membrane. It catalyses the reaction 2 a plastoquinone + 4 hnu + 2 H2O = 2 a plastoquinol + O2. In terms of biological role, photosystem II (PSII) is a light-driven water:plastoquinone oxidoreductase that uses light energy to abstract electrons from H(2)O, generating O(2) and a proton gradient subsequently used for ATP formation. It consists of a core antenna complex that captures photons, and an electron transfer chain that converts photonic excitation into a charge separation. The D1/D2 (PsbA/PsbD) reaction center heterodimer binds P680, the primary electron donor of PSII as well as several subsequent electron acceptors. D2 is needed for assembly of a stable PSII complex. The protein is Photosystem II D2 protein of Cyanophora paradoxa.